Here is a 416-residue protein sequence, read N- to C-terminus: GTPase ERA1, chloroplastic (416 aa).

The N-terminal 53 residues, 1 to 53 (MELGLALRLVAPPPLLPCLSRRALSLPPDFVSSRVLRGRRIHASRLKHGAGVV), are a transit peptide targeting the chloroplast. The 171-residue stretch at 117–287 (RSGYVAVLGK…KEWILSKLPL (171 aa)) folds into the Era-type G domain. The G1 stretch occupies residues 125–132 (GKPNVGKS). A GTP-binding site is contributed by 125-132 (GKPNVGKS). The interval 151 to 155 (QTTRH) is G2. The segment at 172–175 (DTPG) is G3. Residues 172-176 (DTPGV) and 237-240 (NKKD) each bind GTP. Residues 237–240 (NKKD) are G4. A G5 region spans residues 266–268 (ISA). Positions 318 to 395 (YRQEIPYSCQ…YLEVEVKVKE (78 aa)) constitute a KH type-2 domain.

The protein belongs to the TRAFAC class TrmE-Era-EngA-EngB-Septin-like GTPase superfamily. Era GTPase family.

The protein resides in the plastid. The protein localises to the chloroplast stroma. Its subcellular location is the chloroplast nucleoid. Its function is as follows. Nuclear genome-encoded probable GTPase involved in ribosome biogenesis in chloroplasts. Plays a role in 16S rRNA maturation in plastids and may contribute to the assembly of the small (30S) ribosomal subunit. This is GTPase ERA1, chloroplastic from Zea mays (Maize).